The chain runs to 502 residues: Glycerol kinase (502 aa).

Threonine 13 is a binding site for ADP. The ATP site is built by threonine 13, threonine 14, and serine 15. A sn-glycerol 3-phosphate-binding site is contributed by threonine 13. Arginine 17 is an ADP binding site. The sn-glycerol 3-phosphate site is built by arginine 83, glutamate 84, tyrosine 136, and aspartate 246. Residues arginine 83, glutamate 84, tyrosine 136, aspartate 246, and glutamine 247 each coordinate glycerol. 2 residues coordinate ADP: threonine 268 and glycine 311. 4 residues coordinate ATP: threonine 268, glycine 311, glutamine 315, and glycine 412. Positions 412 and 416 each coordinate ADP.

It belongs to the FGGY kinase family.

The enzyme catalyses glycerol + ATP = sn-glycerol 3-phosphate + ADP + H(+). The protein operates within polyol metabolism; glycerol degradation via glycerol kinase pathway; sn-glycerol 3-phosphate from glycerol: step 1/1. Inhibited by fructose 1,6-bisphosphate (FBP). In terms of biological role, key enzyme in the regulation of glycerol uptake and metabolism. Catalyzes the phosphorylation of glycerol to yield sn-glycerol 3-phosphate. The sequence is that of Glycerol kinase from Francisella tularensis subsp. tularensis (strain FSC 198).